The primary structure comprises 255 residues: Acetylglutamate kinase (255 aa).

Residues 40–41 (GG), Arg-62, and Asn-153 each bind substrate.

This sequence belongs to the acetylglutamate kinase family. ArgB subfamily.

It is found in the cytoplasm. The enzyme catalyses N-acetyl-L-glutamate + ATP = N-acetyl-L-glutamyl 5-phosphate + ADP. The protein operates within amino-acid biosynthesis; L-arginine biosynthesis; N(2)-acetyl-L-ornithine from L-glutamate: step 2/4. Functionally, catalyzes the ATP-dependent phosphorylation of N-acetyl-L-glutamate. The protein is Acetylglutamate kinase of Bacillus anthracis (strain CDC 684 / NRRL 3495).